We begin with the raw amino-acid sequence, 191 residues long: dCTP deaminase, dUMP-forming (191 aa).

Residues 101 to 106 (KSSLGR), D119, 127 to 129 (TLE), Q148, Y162, and Q174 each bind dCTP. The active-site Proton donor/acceptor is E129.

This sequence belongs to the dCTP deaminase family. In terms of assembly, homotrimer.

The catalysed reaction is dCTP + 2 H2O = dUMP + NH4(+) + diphosphate. It functions in the pathway pyrimidine metabolism; dUMP biosynthesis; dUMP from dCTP: step 1/1. Bifunctional enzyme that catalyzes both the deamination of dCTP to dUTP and the hydrolysis of dUTP to dUMP without releasing the toxic dUTP intermediate. This is dCTP deaminase, dUMP-forming from Streptomyces coelicolor (strain ATCC BAA-471 / A3(2) / M145).